A 512-amino-acid polypeptide reads, in one-letter code: Bifunctional purine biosynthesis protein PurH (512 aa).

The 144-residue stretch at 1-144 (MKRALVSVSD…KNYHDVTIVV (144 aa)) folds into the MGS-like domain.

Belongs to the PurH family.

The enzyme catalyses (6R)-10-formyltetrahydrofolate + 5-amino-1-(5-phospho-beta-D-ribosyl)imidazole-4-carboxamide = 5-formamido-1-(5-phospho-D-ribosyl)imidazole-4-carboxamide + (6S)-5,6,7,8-tetrahydrofolate. It catalyses the reaction IMP + H2O = 5-formamido-1-(5-phospho-D-ribosyl)imidazole-4-carboxamide. The protein operates within purine metabolism; IMP biosynthesis via de novo pathway; 5-formamido-1-(5-phospho-D-ribosyl)imidazole-4-carboxamide from 5-amino-1-(5-phospho-D-ribosyl)imidazole-4-carboxamide (10-formyl THF route): step 1/1. Its pathway is purine metabolism; IMP biosynthesis via de novo pathway; IMP from 5-formamido-1-(5-phospho-D-ribosyl)imidazole-4-carboxamide: step 1/1. In Limosilactobacillus reuteri (strain DSM 20016) (Lactobacillus reuteri), this protein is Bifunctional purine biosynthesis protein PurH.